Consider the following 537-residue polypeptide: Tegument protein BRRF2 (537 aa).

Disordered regions lie at residues 322–466 (PRFL…AEEF) and 486–537 (GLRV…LSVV). The span at 334–347 (EPQQTCSQLTSRGN) shows a compositional bias: polar residues. Over residues 420-441 (VTGSSQAAPSSSSVTPVASLSG) the composition is skewed to low complexity. Acidic residues predominate over residues 492 to 517 (DEDEDGSEDGEFSDLDLSDSDHEGDE).

It belongs to the lymphocryptovirus BRRF2 family.

The protein localises to the virion tegument. This chain is Tegument protein BRRF2, found in Homo sapiens (Human).